The chain runs to 301 residues: Ornithine carbamoyltransferase (301 aa).

Residues Arg100 and 127 to 130 each bind carbamoyl phosphate; that span reads HPCQ. Residues Asn158, Asp221, and 225–226 contribute to the L-ornithine site; that span reads SM. Carbamoyl phosphate is bound by residues 260–261 and Arg288; that span reads CL.

It belongs to the aspartate/ornithine carbamoyltransferase superfamily. OTCase family.

It is found in the cytoplasm. The enzyme catalyses carbamoyl phosphate + L-ornithine = L-citrulline + phosphate + H(+). It functions in the pathway amino-acid biosynthesis; L-arginine biosynthesis; L-arginine from L-ornithine and carbamoyl phosphate: step 1/3. In terms of biological role, reversibly catalyzes the transfer of the carbamoyl group from carbamoyl phosphate (CP) to the N(epsilon) atom of ornithine (ORN) to produce L-citrulline. The protein is Ornithine carbamoyltransferase of Shewanella oneidensis (strain ATCC 700550 / JCM 31522 / CIP 106686 / LMG 19005 / NCIMB 14063 / MR-1).